Here is a 210-residue protein sequence, read N- to C-terminus: Holliday junction branch migration complex subunit RuvA (210 aa).

A domain I region spans residues 1–64 (MIGLIEGRVC…EDAQLLYGFL (64 aa)). The tract at residues 65 to 143 (HPTERDVFRQ…HIQSDMSLLT (79 aa)) is domain II. A flexible linker region spans residues 144-154 (EVEQQIGIAAN). The interval 155 to 210 (SEGVILAEVESALISLGYRDKEAQQAIKAARETDAGQQLVDTQSLLKLTLKQLSNF) is domain III.

This sequence belongs to the RuvA family. Homotetramer. Forms an RuvA(8)-RuvB(12)-Holliday junction (HJ) complex. HJ DNA is sandwiched between 2 RuvA tetramers; dsDNA enters through RuvA and exits via RuvB. An RuvB hexamer assembles on each DNA strand where it exits the tetramer. Each RuvB hexamer is contacted by two RuvA subunits (via domain III) on 2 adjacent RuvB subunits; this complex drives branch migration. In the full resolvosome a probable DNA-RuvA(4)-RuvB(12)-RuvC(2) complex forms which resolves the HJ.

It localises to the cytoplasm. Its function is as follows. The RuvA-RuvB-RuvC complex processes Holliday junction (HJ) DNA during genetic recombination and DNA repair, while the RuvA-RuvB complex plays an important role in the rescue of blocked DNA replication forks via replication fork reversal (RFR). RuvA specifically binds to HJ cruciform DNA, conferring on it an open structure. The RuvB hexamer acts as an ATP-dependent pump, pulling dsDNA into and through the RuvAB complex. HJ branch migration allows RuvC to scan DNA until it finds its consensus sequence, where it cleaves and resolves the cruciform DNA. The chain is Holliday junction branch migration complex subunit RuvA from Psychrobacter sp. (strain PRwf-1).